A 105-amino-acid polypeptide reads, in one-letter code: Histone H2A-like 1 (105 aa).

It belongs to the histone H2A family. In terms of assembly, the nucleosome is a histone octamer containing two molecules each of H2A, H2B, H3 and H4 assembled in one H3-H4 heterotetramer and two H2A-H2B heterodimers. May be incorporated into a proportion of nucleosomes, replacing one or more H2A molecules. Interacts with H2BC1/TH2B; preferentially dimerizes with H2BC1/TH2B to form nucleosomes. In terms of tissue distribution, testis-specific.

The protein resides in the nucleus. It is found in the chromosome. Functionally, atypical histone H2A which can replace conventional H2A in some nucleosomes and may play a role during spermatogenesis. Nucleosomes wrap and compact DNA into chromatin, limiting DNA accessibility to the cellular machineries which require DNA as a template. Histones thereby play a central role in transcription regulation, DNA repair, DNA replication and chromosomal stability. DNA accessibility is regulated via a complex set of post-translational modifications of histones, also called histone code, and nucleosome remodeling. The chain is Histone H2A-like 1 from Mus musculus (Mouse).